Consider the following 961-residue polypeptide: Copper-exporting P-type ATPase (961 aa).

2 consecutive HMA domains span residues 3–64 (QTTL…YQAT) and 69–130 (PDVE…YHAT). Cys14, Cys17, Cys80, and Cys83 together coordinate Cu(+). Disordered stretches follow at residues 131–153 (QQGIDSPKTEPLTHSAQSQPESL) and 178–201 (VLPTNTALPTNTTSTTSTADTASA). Positions 142–151 (LTHSAQSQPE) are enriched in polar residues. One can recognise an HMA 3 domain in the interval 226–289 (ESVQLLLTGM…AVKNAGYGAE (64 aa)). Positions 237 and 240 each coordinate Cu(+). Transmembrane regions (helical) follow at residues 316–336 (AALGLLLGIPLMAWGLFGGSM), 345–365 (PWLIIGIITLLVMIFAGGHFY), 381–401 (TLVALGTGAAWIYSITVNIWP), 565–585 (AVFVPTVVVIAIVAGLIWYFF), and 592–612 (VYTLVVATTVLIIACPCALGL). The active-site 4-aspartylphosphate intermediate is the Asp650. Residues Asp847 and Asp851 each coordinate Mg(2+). A run of 3 helical transmembrane segments spans residues 860-880 (VGIAMGGGSDIAIETAAITLM), 906-926 (LGAFFYNALGIPIAAGILYPF), and 928-948 (GTLLSPVVAGAAMALSSITVV).

This sequence belongs to the cation transport ATPase (P-type) (TC 3.A.3) family. Type IB subfamily.

It localises to the cell membrane. The enzyme catalyses Cu(+)(in) + ATP + H2O = Cu(+)(out) + ADP + phosphate + H(+). Its function is as follows. Involved in copper export. This chain is Copper-exporting P-type ATPase (copA), found in Yersinia pestis.